The primary structure comprises 198 residues: MKLYSLSVFYKGEPKAVLLKAAYDVSSFSFFQRSSVQEFMTFTSQLIVERSAKGSRASVKEQEYLCHVYVRSDSLAGVVIADSEYPSRVAFTLLEKVLDEFSKQVDRIDWPVGSPATIHYTALDGHLSRYQNPREADPMSKVQAELDETKIILHNTMESLLERGEKLDDLVSKSEVLGTQSKAFYKTARKQNSCCAIM.

The Longin domain occupies 8–131 (VFYKGEPKAV…ALDGHLSRYQ (124 aa)). The v-SNARE coiled-coil homology domain maps to 138–198 (PMSKVQAELD…RKQNSCCAIM (61 aa)). A Phosphoserine modification is found at Ser-159. The S-palmitoyl cysteine moiety is linked to residue Cys-194. Cys-195 bears the Cysteine methyl ester mark. Residue Cys-195 is the site of S-farnesyl cysteine attachment. Positions 196–198 (AIM) are cleaved as a propeptide — removed in mature form.

It belongs to the synaptobrevin family. In terms of assembly, identified in 2 different SNARE complexes; the first one composed of GOSR1, GOSR2 and STX5 and the second one composed of BET1L, GOSR1 and STX5. Post-translationally, palmitoylated; catalyzes its own palmitoylation. Palmitoylation is required for Golgi targeting. Farnesylation is required for Golgi targeting. In terms of processing, (Microbial infection) Targeted and hydrolyzed by C.botulinum neurotoxin type X (BoNT/X) which hydrolyzes the 173-Lys-|-Ser-174 bond and probably inhibits neurotransmitter release. It remains unknown whether BoNT/X is ever produced, or what organisms it targets. In terms of tissue distribution, highly expressed by neurons in brain and faintly detected in spleen, lung and kidney (at protein level). Ubiquitously expressed.

It is found in the cytoplasm. Its subcellular location is the cytosol. It localises to the cytoplasmic vesicle membrane. The protein localises to the golgi apparatus membrane. Functionally, vesicular soluble NSF attachment protein receptor (v-SNARE) mediating vesicle docking and fusion to a specific acceptor cellular compartment. Functions in endoplasmic reticulum to Golgi transport; as part of a SNARE complex composed of GOSR1, GOSR2 and STX5. Functions in early/recycling endosome to TGN transport; as part of a SNARE complex composed of BET1L, GOSR1 and STX5. Has a S-palmitoyl transferase activity. This Rattus norvegicus (Rat) protein is Synaptobrevin homolog YKT6 (Ykt6).